Reading from the N-terminus, the 187-residue chain is GMP synthase [glutamine-hydrolyzing] subunit A (187 aa).

Positions 1–187 constitute a Glutamine amidotransferase type-1 domain; sequence MILIIDNHGQ…KNFAKLCGEL (187 aa). Residue C76 is the Nucleophile of the active site. Active-site residues include H164 and E166.

Heterodimer composed of a glutamine amidotransferase subunit (A) and a GMP-binding subunit (B).

It carries out the reaction XMP + L-glutamine + ATP + H2O = GMP + L-glutamate + AMP + diphosphate + 2 H(+). Its pathway is purine metabolism; GMP biosynthesis; GMP from XMP (L-Gln route): step 1/1. Its function is as follows. Catalyzes the synthesis of GMP from XMP. The chain is GMP synthase [glutamine-hydrolyzing] subunit A from Methanopyrus kandleri (strain AV19 / DSM 6324 / JCM 9639 / NBRC 100938).